A 237-amino-acid chain; its full sequence is Ribosomal RNA small subunit methyltransferase G (237 aa).

Residues Gly-78, Phe-83, 129-130 (AE), and Arg-148 each bind S-adenosyl-L-methionine.

It belongs to the methyltransferase superfamily. RNA methyltransferase RsmG family.

It localises to the cytoplasm. Specifically methylates the N7 position of a guanine in 16S rRNA. The polypeptide is Ribosomal RNA small subunit methyltransferase G (Streptococcus pyogenes serotype M6 (strain ATCC BAA-946 / MGAS10394)).